A 684-amino-acid polypeptide reads, in one-letter code: Probable potassium transport system protein Kup (684 aa).

The next 12 helical transmembrane spans lie at 19-39 (ALLV…LYVM), 61-81 (VSLI…LIAL), 104-124 (WLVL…MLTP), 151-171 (QVIW…RFGT), 177-197 (AFGP…FIAL), 223-243 (MGLF…ALYS), 255-275 (LSWP…AVWL), 303-323 (LGAI…LISG), 352-372 (LYIP…IGYF), 381-401 (AYGL…YQYL), 407-427 (PAVV…VFFI), and 433-453 (FLHG…VMYV).

This sequence belongs to the HAK/KUP transporter (TC 2.A.72) family.

The protein resides in the cell membrane. The enzyme catalyses K(+)(in) + H(+)(in) = K(+)(out) + H(+)(out). Transport of potassium into the cell. Likely operates as a K(+):H(+) symporter. The chain is Probable potassium transport system protein Kup from Lacticaseibacillus paracasei (strain ATCC 334 / BCRC 17002 / CCUG 31169 / CIP 107868 / KCTC 3260 / NRRL B-441) (Lactobacillus paracasei).